The chain runs to 673 residues: Probable serine/threonine-protein kinase SCO3848 (673 aa).

The 267-residue stretch at 11-277 folds into the Protein kinase domain; it reads YELGPVLGRG…EMRVDIEACL (267 aa). Residues 17–25 and Lys-40 each bind ATP; that span reads LGRGGMAEV. Catalysis depends on Asp-138, which acts as the Proton acceptor. The interval 302–345 is disordered; the sequence is DQPTTALRSDGGGGATTMLPPMNPDDGGYGYDERPDRRRQQPRK. PASTA domains follow at residues 379–445, 446–511, 512–580, and 581–649; these read GNDK…VVST, GAPK…EVAK, AEEK…VVGK, and AVEK…MTVP. A disordered region spans residues 472–500; it reads FEVETKQTESSQDEGTILSQNPDPGKELE. Over residues 479–493 the composition is skewed to polar residues; the sequence is TESSQDEGTILSQNP. Disordered stretches follow at residues 613–641 and 653–673; these read AQGSPGDDNAKVFASNPQPGSEVDDPAAT and GNGNGGNGNGGAIAGLPGFGD.

The protein belongs to the protein kinase superfamily. Ser/Thr protein kinase family.

It carries out the reaction L-seryl-[protein] + ATP = O-phospho-L-seryl-[protein] + ADP + H(+). The catalysed reaction is L-threonyl-[protein] + ATP = O-phospho-L-threonyl-[protein] + ADP + H(+). The polypeptide is Probable serine/threonine-protein kinase SCO3848 (Streptomyces coelicolor (strain ATCC BAA-471 / A3(2) / M145)).